We begin with the raw amino-acid sequence, 158 residues long: 2-C-methyl-D-erythritol 2,4-cyclodiphosphate synthase (158 aa).

2 residues coordinate a divalent metal cation: Asp8 and His10. 4-CDP-2-C-methyl-D-erythritol 2-phosphate-binding positions include 8–10 (DAH) and 34–35 (HS). Residue His42 participates in a divalent metal cation binding. Residues 56-58 (DIG), 132-135 (TTTE), and Arg142 contribute to the 4-CDP-2-C-methyl-D-erythritol 2-phosphate site.

The protein belongs to the IspF family. In terms of assembly, homotrimer. A divalent metal cation is required as a cofactor.

The enzyme catalyses 4-CDP-2-C-methyl-D-erythritol 2-phosphate = 2-C-methyl-D-erythritol 2,4-cyclic diphosphate + CMP. The protein operates within isoprenoid biosynthesis; isopentenyl diphosphate biosynthesis via DXP pathway; isopentenyl diphosphate from 1-deoxy-D-xylulose 5-phosphate: step 4/6. Its function is as follows. Involved in the biosynthesis of isopentenyl diphosphate (IPP) and dimethylallyl diphosphate (DMAPP), two major building blocks of isoprenoid compounds. Catalyzes the conversion of 4-diphosphocytidyl-2-C-methyl-D-erythritol 2-phosphate (CDP-ME2P) to 2-C-methyl-D-erythritol 2,4-cyclodiphosphate (ME-CPP) with a corresponding release of cytidine 5-monophosphate (CMP). This Nitrosococcus oceani (strain ATCC 19707 / BCRC 17464 / JCM 30415 / NCIMB 11848 / C-107) protein is 2-C-methyl-D-erythritol 2,4-cyclodiphosphate synthase.